Reading from the N-terminus, the 418-residue chain is Histidine--tRNA ligase (418 aa).

This sequence belongs to the class-II aminoacyl-tRNA synthetase family.

It is found in the cytoplasm. The enzyme catalyses tRNA(His) + L-histidine + ATP = L-histidyl-tRNA(His) + AMP + diphosphate + H(+). In Methanococcus maripaludis (strain C7 / ATCC BAA-1331), this protein is Histidine--tRNA ligase.